The following is a 403-amino-acid chain: MTGEEWGLTVLSFLVRVGFFLFGIYQDANFKVRYTDIDYFVFHDAAKYVYEGKSPYARDTYRYTPLLSWLLVPNHYFGWFHLGKVIFVIFDLVTGLIIMKLLNQAISRKRALILESIWLLNPMVITISTRGNAESVLCCLIMFTLFFLQKSRYTLAGILYGLSIHFKIYPIIYCIPIAIFIYYNKRNQGPRTQLTSLLNIGLSTLTTLLGCGWAMYKIYGYEFLDQAYLYHLYRTDHRHNFSVWNMLLYLDSANKENGESNLSRYAFVPQLLLVLVTGCLEWWNPTFDNLLRVLFVQTFAFVTYNKVCTSQYFVWYLIFLPFYLSRTHIGWKKGLLMATLWVGTQGIWLSQGYYLEFEGKNVFYPGLFIASVLFFVTNVWLLGQFITDIKIPTQPTVSNKKNN.

The Cytoplasmic segment spans residues 1–4 (MTGE). Residues 5 to 25 (EWGLTVLSFLVRVGFFLFGIY) form a helical membrane-spanning segment. The Lumenal segment spans residues 26 to 78 (QDANFKVRYTDIDYFVFHDAAKYVYEGKSPYARDTYRYTPLLSWLLVPNHYFG). The chain crosses the membrane as a helical span at residues 79–99 (WFHLGKVIFVIFDLVTGLIIM). The Cytoplasmic portion of the chain corresponds to 100 to 110 (KLLNQAISRKR). Residues 111 to 131 (ALILESIWLLNPMVITISTRG) form a helical membrane-spanning segment. A topological domain (lumenal) is located at residue N132. The helical transmembrane segment at 133–149 (AESVLCCLIMFTLFFLQ) threads the bilayer. Residues 150–160 (KSRYTLAGILY) lie on the Cytoplasmic side of the membrane. Residues 161 to 181 (GLSIHFKIYPIIYCIPIAIFI) traverse the membrane as a helical segment. At 182 to 193 (YYNKRNQGPRTQ) the chain is on the lumenal side. The helical transmembrane segment at 194–214 (LTSLLNIGLSTLTTLLGCGWA) threads the bilayer. At 215 to 266 (MYKIYGYEFLDQAYLYHLYRTDHRHNFSVWNMLLYLDSANKENGESNLSRYA) the chain is on the cytoplasmic side. A helical transmembrane segment spans residues 267 to 287 (FVPQLLLVLVTGCLEWWNPTF). Topologically, residues 288 to 310 (DNLLRVLFVQTFAFVTYNKVCTS) are lumenal. Residues 311 to 331 (QYFVWYLIFLPFYLSRTHIGW) form a helical membrane-spanning segment. At 332–334 (KKG) the chain is on the cytoplasmic side. Residues 335 to 355 (LLMATLWVGTQGIWLSQGYYL) traverse the membrane as a helical segment. Residues 356-361 (EFEGKN) lie on the Lumenal side of the membrane. The helical transmembrane segment at 362–382 (VFYPGLFIASVLFFVTNVWLL) threads the bilayer. At 383-403 (GQFITDIKIPTQPTVSNKKNN) the chain is on the cytoplasmic side.

It belongs to the PIGM family.

The protein resides in the endoplasmic reticulum membrane. Its pathway is glycolipid biosynthesis; glycosylphosphatidylinositol-anchor biosynthesis. Its function is as follows. Mannosyltransferase involved in glycosylphosphatidylinositol-anchor biosynthesis. Transfers the first alpha-1,4-mannose to GlcN-acyl-PI during GPI precursor assembly. Required for cell wall integrity. This chain is GPI mannosyltransferase 1 (GPI14), found in Saccharomyces cerevisiae (strain ATCC 204508 / S288c) (Baker's yeast).